A 429-amino-acid chain; its full sequence is Arginine biosynthesis bifunctional protein ArgJ (429 aa).

Substrate-binding residues include T181, K207, T218, E302, N424, and S429. T218 serves as the catalytic Nucleophile.

It belongs to the ArgJ family. In terms of assembly, heterotetramer of two alpha and two beta chains.

The protein localises to the cytoplasm. The catalysed reaction is N(2)-acetyl-L-ornithine + L-glutamate = N-acetyl-L-glutamate + L-ornithine. The enzyme catalyses L-glutamate + acetyl-CoA = N-acetyl-L-glutamate + CoA + H(+). It participates in amino-acid biosynthesis; L-arginine biosynthesis; L-ornithine and N-acetyl-L-glutamate from L-glutamate and N(2)-acetyl-L-ornithine (cyclic): step 1/1. It functions in the pathway amino-acid biosynthesis; L-arginine biosynthesis; N(2)-acetyl-L-ornithine from L-glutamate: step 1/4. Catalyzes two activities which are involved in the cyclic version of arginine biosynthesis: the synthesis of N-acetylglutamate from glutamate and acetyl-CoA as the acetyl donor, and of ornithine by transacetylation between N(2)-acetylornithine and glutamate. The sequence is that of Arginine biosynthesis bifunctional protein ArgJ from Chlorobium chlorochromatii (strain CaD3).